A 281-amino-acid polypeptide reads, in one-letter code: Probable endonuclease 4 (281 aa).

9 residues coordinate Zn(2+): H69, H109, E145, D179, H182, H216, D229, H231, and E261.

Belongs to the AP endonuclease 2 family. Requires Zn(2+) as cofactor.

It catalyses the reaction Endonucleolytic cleavage to 5'-phosphooligonucleotide end-products.. In terms of biological role, endonuclease IV plays a role in DNA repair. It cleaves phosphodiester bonds at apurinic or apyrimidinic (AP) sites, generating a 3'-hydroxyl group and a 5'-terminal sugar phosphate. The polypeptide is Probable endonuclease 4 (Pectobacterium carotovorum subsp. carotovorum (strain PC1)).